A 349-amino-acid polypeptide reads, in one-letter code: KH domain-containing, RNA-binding, signal transduction-associated protein 2 (349 aa).

Residues 65–135 (LIPVKQYPKF…HLSDELHVLI (71 aa)) form the KH domain. Disordered stretches follow at residues 181 to 263 (SEES…PPPA) and 320 to 349 (EEWT…YGRY). Low complexity predominate over residues 218 to 231 (RGVLTPRGTTVTRG). Omega-N-methylarginine is present on residues Arg-230 and Arg-240. Over residues 340–349 (GYREHPYGRY) the composition is skewed to basic and acidic residues.

It belongs to the KHDRBS family. In terms of assembly, self-associates to form homooligomers. Interacts with SAFB, SFRS9 and YTHDC1. Found in a complex with KHDRBS1, KHDRBS2 and KHDRBS3. Interacts with RBMX. Interacts with the SH3 domains of FYN and PLCG1. Interacts with the SH2 domains of FYN, GRAP2, PLCG1 and RASA1. Interacts with RBMX. In terms of processing, methylated. Phosphorylated on tyrosine residues by FYN. Tyrosine phosphorylated by PTK6 and SRC. Tyrosine phosphorylated by SRC during mitosis. In terms of tissue distribution, expressed in the cortex, cerebellum, striatum, midbrain, brainstem and thalamus of the brain (at protein level). Expressed in neurons (at protein level). Expressed in brain and testis. Expressed in the dentate gyrus of the hippocampus.

It is found in the nucleus. In terms of biological role, RNA-binding protein that plays a role in the regulation of alternative splicing and influences mRNA splice site selection and exon inclusion. Its phosphorylation by FYN inhibits its ability to regulate splice site selection. Induces an increased concentration-dependent incorporation of exon in CD44 pre-mRNA by direct binding to purine-rich exonic enhancer. May function as an adapter protein for Src kinases during mitosis. Binds both poly(A) and poly(U) homopolymers. Phosphorylation by PTK6 inhibits its RNA-binding ability. This Rattus norvegicus (Rat) protein is KH domain-containing, RNA-binding, signal transduction-associated protein 2 (Khdrbs2).